Reading from the N-terminus, the 217-residue chain is Adenylate kinase (217 aa).

Residue 12–17 participates in ATP binding; it reads GSGKGS. The tract at residues 32-61 is NMP; the sequence is STGEIFRNEIKNKTPLGLKVAEIVNDGKYV. Residues Thr-33, Arg-38, 59 to 61, 88 to 91, and Gln-95 contribute to the AMP site; these read KYV and GYPR. The segment at 125–165 is LID; the sequence is FRRICPICKSIYHLKYNPSKKGEFCENHLENLTKIEARQDD. ATP contacts are provided by residues Arg-126 and 135 to 136; that span reads IY. The AMP site is built by Arg-162 and Arg-173. Residue Glu-201 coordinates ATP.

Belongs to the adenylate kinase family. In terms of assembly, monomer.

It localises to the cytoplasm. The enzyme catalyses AMP + ATP = 2 ADP. Its pathway is purine metabolism; AMP biosynthesis via salvage pathway; AMP from ADP: step 1/1. Catalyzes the reversible transfer of the terminal phosphate group between ATP and AMP. Plays an important role in cellular energy homeostasis and in adenine nucleotide metabolism. The sequence is that of Adenylate kinase from Mycoplasma mobile (strain ATCC 43663 / 163K / NCTC 11711) (Mesomycoplasma mobile).